The following is a 604-amino-acid chain: Membrane protein insertase YidC (604 aa).

A helical membrane pass occupies residues 8 to 28 (LYLAIGLSLLVLIGWNYFFAG). The segment at 42 to 84 (EQQAQTQTTSDTTARSDLNVPGQRSLPGESPQTQLSRPEALAA) is disordered. Over residues 43 to 58 (QQAQTQTTSDTTARSD) the composition is skewed to low complexity. Helical transmembrane passes span 349–369 (FDLL…FWIL), 375–395 (VVGN…AVFF), 449–469 (LPML…FVTI), 507–527 (MIGH…SMFF), and 546–566 (WMPV…VIYW).

The protein belongs to the OXA1/ALB3/YidC family. Type 1 subfamily. Interacts with the Sec translocase complex via SecD. Specifically interacts with transmembrane segments of nascent integral membrane proteins during membrane integration.

The protein localises to the cell inner membrane. Functionally, required for the insertion and/or proper folding and/or complex formation of integral membrane proteins into the membrane. Involved in integration of membrane proteins that insert both dependently and independently of the Sec translocase complex, as well as at least some lipoproteins. Aids folding of multispanning membrane proteins. This Beijerinckia indica subsp. indica (strain ATCC 9039 / DSM 1715 / NCIMB 8712) protein is Membrane protein insertase YidC.